An 880-amino-acid polypeptide reads, in one-letter code: MPKPTISYSLNGLPAAAVDSIGSLLEILARIRGIVLTEQSNDETASIIISAPDVHRLVVGSDDSHYDSTTLYIEDFLNRLCEALDAVGKKAEAGAFRHALQLYHTDRELGALKHGESVTNRQLKNDSFEDLEFLVEAWLVALNSEESARKLPAPLPVKSPDTRAMTLAEKILAHHAFSLPSSGGLKSGELGMKHGMVSIGELPSVWRNDRFWLAGDHTVEPRTYDQPRVRELLNGLNDAKQEFKMTENQGSNYTILHTEFVRERAEPGMLALGSDSHTCSAGAVSCLAIGLGAADVMTALATGETWIKVPESIRIDFTGEPAWYIRGKDVILYILKELKRNTFAADRIVEFGGLGARFLSCDARFAITNMCTELGGVTGIFVPDEVTNTFVSGRPQSKYKSNSIYFQPDKDASYAATFQIDLTMVESFIALHPSPDNVVPVSEKLDMSFEGCFIGACTTTEEELVLGALVLEAGLKNGLGLAPGKRMVVPGSIPIVNSLRELGLLEIYAQTGFEQPAVGCSLCLGMGADRAGEGENWISSQNRNFKNRMGKGSTGHICSAATVAASSFSMRLTNPAALLAQVSPDRYKALLESCQSYKNRVRKVKSSKKESVKRSVSVMPSYVEPYLHFRSPLTEKHTQMHAPSGGEGEQCGNLDIIESKIYALGDFVDTDAVSRDLFLHLSDVSGETMTSGVLTMLEIIPAAFILESPTDTLLGSHALEFTNPDFRDKVRQGMRVVVAGKAFGCGSSREEAPRALKGLGVQCVIAKSFSFIYGRNQPSIGLLGINIADDRFYELAKTGAGIKIDVPGRVVRLEGQNFPFVLDDMELSLIKNNGLATAYKKYGKNVFALLCNTKSSLRPSELAELQLKGVSDGMQTSLEW.

[4Fe-4S] cluster contacts are provided by Cys457, Cys520, and Cys523.

This sequence belongs to the aconitase/IPM isomerase family. LeuC type 2 subfamily. [4Fe-4S] cluster serves as cofactor.

The enzyme catalyses (2R,3S)-3-isopropylmalate = (2S)-2-isopropylmalate. It functions in the pathway mycotoxin biosynthesis. Functionally, 3-isopropylmalate dehydratase large subunit; part of the gene cluster that mediates the biosynthesis of pneumocandins, lipohexapeptides of the echinocandin family that prevent fungal cell wall formation by non-competitive inhibition of beta-1,3-glucan synthase. The 10,12-dimethylmyristoyl side chain is synthesized by the reducing polyketide synthase gloL/GLPKS4. The thioesterase gloN/GLHYD exclusively interacts with gloL/GLPKS4 to maintain turnover of the polyketide side chain. The 10R,12S-dimethylmyristic acid is then transferred to the first thiolation domain of the nonribosomal peptide synthetase gloA/GLNRPS4 by the acyl-AMP ligase gloD/GLligase, followed by its acylation to L-ornithine to trigger elongation of the cyclic hexapeptide. L-ornithine, 4R-hydroxyl-L-proline (generated from L-proline by the dioxygenase gloF/GLOXY2), 3S-hydroxyl-L-homotyrosine (generated by gloG/GLHtyB, gloH/GLHtyA, gloI/GLHtyC, gloJ/GLHtyD and hydroxylated at C-3 by the dioxygenase gloM/GLOXY1), 3R-hydroxyl-L-glutamine (generated from L-glutamine probably by the dioxygenase gloE/GLOXY3) and 3S-hydroxyl-L-proline (generated from L-proline by the dioxygenase gloF/GLOXY2 to yield pneumocandin B0), or 3S-hydroxyl-4S-methyl-L-proline (generated from L-leucine by the dioxygenase gloC/GLOXY4 to yield pneumocandin A0) are sequentially added to the growing chain. The last C domain of gloA/GLNRPS4 is proposed to be responsible for cyclization by condensation to form the peptide bond between L-ornithine and 3S-hydroxyl-4S-methyl-L-proline (for pneumocandin A0) or 3S-hydroxyl-L-proline (for pneumocandin B0). Finally, the subsequent C-4 hydroxylation of 3S-hydroxyl-L-homotyrosine and L-ornithine dihydroxylation at C-4 and C-5 are performed by the cytochrome P450 monooxygenases gloP/GLP450-1 and gloO/GLP450-2, respectively. The sequence is that of 3-isopropylmalate dehydratase large subunit gloJ from Glarea lozoyensis (strain ATCC 20868 / MF5171).